The following is a 442-amino-acid chain: Mitochondrial distribution and morphology protein 12 (442 aa).

The SMP-LTD domain maps to 1-442 (MSIDINWEAA…VYPSFWTFLV (442 aa)). Disordered regions lie at residues 67-125 (NDFY…RVGY), 202-277 (LSLA…RRMR), and 364-387 (EGYH…RRSN). Over residues 69-80 (FYEEDEDGEDLS) the composition is skewed to acidic residues. Polar residues predominate over residues 90 to 100 (PSSQGLSQSTP). Over residues 101–112 (NGDAGSSNSSSN) the composition is skewed to low complexity. Positions 213–222 (RQRERARSSD) are enriched in basic and acidic residues. Low complexity predominate over residues 227-245 (SPQSRSRPSTSSTRQRTST).

This sequence belongs to the MDM12 family. Component of the ER-mitochondria encounter structure (ERMES) or MDM complex, composed of MMM1, MDM10, MDM12 and MDM34. An MMM1 homodimer associates with one molecule of MDM12 on each side in a pairwise head-to-tail manner, and the SMP-LTD domains of MMM1 and MDM12 generate a continuous hydrophobic tunnel for phospholipid trafficking.

It is found in the mitochondrion outer membrane. The protein localises to the endoplasmic reticulum membrane. Its function is as follows. Component of the ERMES/MDM complex, which serves as a molecular tether to connect the endoplasmic reticulum (ER) and mitochondria. Components of this complex are involved in the control of mitochondrial shape and protein biogenesis, and function in nonvesicular lipid trafficking between the ER and mitochondria. MDM12 is required for the interaction of the ER-resident membrane protein MMM1 and the outer mitochondrial membrane-resident beta-barrel protein MDM10. The MDM12-MMM1 subcomplex functions in the major beta-barrel assembly pathway that is responsible for biogenesis of all mitochondrial outer membrane beta-barrel proteins, and acts in a late step after the SAM complex. The MDM10-MDM12-MMM1 subcomplex further acts in the TOM40-specific pathway after the action of the MDM12-MMM1 complex. Essential for establishing and maintaining the structure of mitochondria and maintenance of mtDNA nucleoids. This Arthroderma otae (strain ATCC MYA-4605 / CBS 113480) (Microsporum canis) protein is Mitochondrial distribution and morphology protein 12.